The primary structure comprises 260 residues: Major prion protein (260 aa).

The N-terminal stretch at Met-1 to Cys-22 is a signal peptide. An interaction with GRB2, ERI3 and SYN1 region spans residues Lys-23–Ser-237. The segment at Pro-26–Pro-112 is disordered. A run of 6 repeats spans residues Pro-51–Gln-58, Pro-59–Gln-66, Pro-67–Gln-74, Pro-75–Gln-82, Pro-83–Gln-90, and Pro-91–Gln-98. The tract at residues Pro-51 to Gln-98 is 6 X 8 AA tandem repeats of P-H-G-G-G-W-G-Q. The segment covering Gln-52–Thr-102 has biased composition (gly residues). The Cu(2+) site is built by His-68, Gly-69, Gly-70, His-76, Gly-77, Gly-78, His-84, Gly-85, Gly-86, His-92, Gly-93, and Gly-94. Cys-186 and Cys-221 are oxidised to a cystine. 2 N-linked (GlcNAc...) asparagine glycosylation sites follow: Asn-188 and Asn-204. Residue Ser-237 is the site of GPI-anchor amidated serine attachment. Residues Ser-238–Gly-260 constitute a propeptide, removed in mature form.

This sequence belongs to the prion family. In terms of assembly, monomer and homodimer. Has a tendency to aggregate into amyloid fibrils containing a cross-beta spine, formed by a steric zipper of superposed beta-strands. Soluble oligomers may represent an intermediate stage on the path to fibril formation. Copper binding may promote oligomerization. Interacts with GRB2, APP, ERI3/PRNPIP and SYN1. Mislocalized cytosolically exposed PrP interacts with MGRN1; this interaction alters MGRN1 subcellular location and causes lysosomal enlargement. Interacts with KIAA1191.

The protein localises to the cell membrane. The protein resides in the golgi apparatus. Its primary physiological function is unclear. Has cytoprotective activity against internal or environmental stresses. May play a role in neuronal development and synaptic plasticity. May be required for neuronal myelin sheath maintenance. May play a role in iron uptake and iron homeostasis. Soluble oligomers are toxic to cultured neuroblastoma cells and induce apoptosis (in vitro). Association with GPC1 (via its heparan sulfate chains) targets PRNP to lipid rafts. Also provides Cu(2+) or Zn(2+) for the ascorbate-mediated GPC1 deaminase degradation of its heparan sulfate side chains. The chain is Major prion protein (PRNP) from Saimiri sciureus (Common squirrel monkey).